The primary structure comprises 270 residues: MIOREX complex component 3 (270 aa).

Residues 1–12 constitute a mitochondrion transit peptide; sequence MSRTIPFLFKLV.

In terms of assembly, associates with the mitochondrial ribosome.

The protein localises to the mitochondrion. Component of MIOREX complexes, large expressome-like assemblies of ribosomes with factors involved in all the steps of post-transcriptional gene expression. In Saccharomyces cerevisiae (strain ATCC 204508 / S288c) (Baker's yeast), this protein is MIOREX complex component 3.